A 681-amino-acid chain; its full sequence is Methionine--tRNA ligase (681 aa).

Positions 18–28 (PYANGSIHLGH) match the 'HIGH' region motif. Positions 149, 152, 162, and 165 each coordinate Zn(2+). Residues 334 to 338 (KMSKS) carry the 'KMSKS' region motif. Position 337 (Lys-337) interacts with ATP. Residues 580-681 (DFAKLDLRIV…NGAEPGQRVS (102 aa)) enclose the tRNA-binding domain.

It belongs to the class-I aminoacyl-tRNA synthetase family. MetG type 1 subfamily. Homodimer. Zn(2+) serves as cofactor.

It localises to the cytoplasm. It carries out the reaction tRNA(Met) + L-methionine + ATP = L-methionyl-tRNA(Met) + AMP + diphosphate. Its function is as follows. Is required not only for elongation of protein synthesis but also for the initiation of all mRNA translation through initiator tRNA(fMet) aminoacylation. The chain is Methionine--tRNA ligase from Chromohalobacter salexigens (strain ATCC BAA-138 / DSM 3043 / CIP 106854 / NCIMB 13768 / 1H11).